The primary structure comprises 1026 residues: Multidrug resistance protein MdtC (1026 aa).

11 helical membrane passes run 15-35, 333-353, 360-380, 387-407, 431-451, 463-483, 528-548, 853-873, 897-917, 953-973, and 984-1004; these read ILIA…LPVA, EVEE…FLFL, LIPA…MYLC, LSLM…IVVL, VGFT…PLLL, FAVT…TLTP, LVGV…IAIP, LILI…LYES, LFNA…IGIV, PIMM…LSGG, and ITIV…TPVV.

Belongs to the resistance-nodulation-cell division (RND) (TC 2.A.6) family. MdtC subfamily. As to quaternary structure, part of a tripartite efflux system composed of MdtA, MdtB and MdtC. MdtC forms a heteromultimer with MdtB.

The protein localises to the cell inner membrane. The sequence is that of Multidrug resistance protein MdtC from Salmonella agona (strain SL483).